The following is a 604-amino-acid chain: Putative O-acetyltransferase SAR0937 (604 aa).

Helical transmembrane passes span 15-35 (YMPG…IYHL), 43-63 (GFLG…SLLL), 85-105 (LLPA…LLKS), 150-170 (AIEE…LLTI), 176-196 (IGFI…FIYS), 212-232 (LQTL…KLKN), 240-260 (YVID…FFII), 267-287 (IYDG…ASVV), 310-330 (YSLY…YVDG), 332-352 (IPVY…ELSY), and 377-397 (FIRM…LVGA). Residues S459, D581, and H584 contribute to the active site.

It belongs to the acyltransferase 3 family.

Its subcellular location is the cell membrane. The chain is Putative O-acetyltransferase SAR0937 from Staphylococcus aureus (strain MRSA252).